Reading from the N-terminus, the 483-residue chain is Replication factor C large subunit (483 aa).

ATP is bound at residue 44-51; sequence GSPGVGKT. The segment at 415–483 is disordered; sequence AVDHGGGIFA…DGQAGLSDFM (69 aa). Over residues 430–443 the composition is skewed to acidic residues; the sequence is AQSDTESDDDDDGD. The segment covering 451–463 has biased composition (basic and acidic residues); the sequence is DEPKEESVNREQS.

Belongs to the activator 1 small subunits family. RfcL subfamily. In terms of assembly, heteromultimer composed of small subunits (RfcS) and large subunits (RfcL).

Its function is as follows. Part of the RFC clamp loader complex which loads the PCNA sliding clamp onto DNA. This is Replication factor C large subunit from Natronomonas pharaonis (strain ATCC 35678 / DSM 2160 / CIP 103997 / JCM 8858 / NBRC 14720 / NCIMB 2260 / Gabara) (Halobacterium pharaonis).